The chain runs to 625 residues: Isocitrate dehydrogenase kinase/phosphatase (625 aa).

ATP contacts are provided by residues 325 to 331 and lysine 346; that span reads APGIKGM. Residue aspartate 381 is part of the active site. The segment at 596 to 625 is disordered; it reads RRHSPGRNDHELLTHLPPEPMLTGLSGMTP.

It belongs to the AceK family.

It localises to the cytoplasm. It carries out the reaction L-seryl-[isocitrate dehydrogenase] + ATP = O-phospho-L-seryl-[isocitrate dehydrogenase] + ADP + H(+). In terms of biological role, bifunctional enzyme which can phosphorylate or dephosphorylate isocitrate dehydrogenase (IDH) on a specific serine residue. This is a regulatory mechanism which enables bacteria to bypass the Krebs cycle via the glyoxylate shunt in response to the source of carbon. When bacteria are grown on glucose, IDH is fully active and unphosphorylated, but when grown on acetate or ethanol, the activity of IDH declines drastically concomitant with its phosphorylation. The chain is Isocitrate dehydrogenase kinase/phosphatase from Polaromonas sp. (strain JS666 / ATCC BAA-500).